The chain runs to 525 residues: Protein disulfide-isomerase A2 (525 aa).

Residues 1 to 21 (MSCQLLPVLLLLLLRASCPWG) form the signal peptide. The Thioredoxin 1 domain maps to 27–152 (RSPSEEPPEE…IAEWLRRRVG (126 aa)). Active-site nucleophile residues include C71 and C74. Residues C71 and C74 are joined by a disulfide bond. N-linked (GlcNAc...) asparagine glycosylation is found at N127 and N284. The Thioredoxin 2 domain maps to 367–496 (VLNGQVKPYL…FSKFLDNGGV (130 aa)). Catalysis depends on nucleophile residues C418 and C421. A disulfide bridge links C418 with C421. The disordered stretch occupies residues 498-525 (PTEEPLEEPAAPFPEPPANSTMGSKEEL). A glycan (N-linked (GlcNAc...) asparagine) is linked at N516. A compositionally biased stretch (polar residues) spans 516–525 (NSTMGSKEEL). The short motif at 522 to 525 (KEEL) is the Prevents secretion from ER element.

This sequence belongs to the protein disulfide isomerase family. As to quaternary structure, monomer; predominantly as monomer under reducing conditions. Homodimer; disulfide-linked. Part of a large chaperone multiprotein complex comprising DNAJB11, HSP90B1, HSPA5, HYOU, PDIA2, PDIA4, PDIA6, PPIB, SDF2L1, UGGT1 and very small amounts of ERP29, but not, or at very low levels, CALR nor CANX. The disulfide-linked homodimer exhibits an enhanced chaperone activity. In terms of processing, glycosylated.

It localises to the endoplasmic reticulum lumen. It catalyses the reaction Catalyzes the rearrangement of -S-S- bonds in proteins.. Its function is as follows. Acts as an intracellular estrogen-binding protein. May be involved in modulating cellular levels and biological functions of estrogens in the pancreas. May act as a chaperone that inhibits aggregation of misfolded proteins. This chain is Protein disulfide-isomerase A2 (PDIA2), found in Pongo abelii (Sumatran orangutan).